Here is a 189-residue protein sequence, read N- to C-terminus: Peptidyl-tRNA hydrolase (189 aa).

A tRNA-binding site is contributed by Tyr14. The Proton acceptor role is filled by His19. TRNA-binding residues include Phe64, Asn66, and Asn112.

The protein belongs to the PTH family. As to quaternary structure, monomer.

It is found in the cytoplasm. It carries out the reaction an N-acyl-L-alpha-aminoacyl-tRNA + H2O = an N-acyl-L-amino acid + a tRNA + H(+). In terms of biological role, hydrolyzes ribosome-free peptidyl-tRNAs (with 1 or more amino acids incorporated), which drop off the ribosome during protein synthesis, or as a result of ribosome stalling. Catalyzes the release of premature peptidyl moieties from peptidyl-tRNA molecules trapped in stalled 50S ribosomal subunits, and thus maintains levels of free tRNAs and 50S ribosomes. This is Peptidyl-tRNA hydrolase from Rhizorhabdus wittichii (strain DSM 6014 / CCUG 31198 / JCM 15750 / NBRC 105917 / EY 4224 / RW1) (Sphingomonas wittichii).